Here is a 602-residue protein sequence, read N- to C-terminus: Aspartate--tRNA(Asp/Asn) ligase (602 aa).

Glutamate 170 lines the L-aspartate pocket. Positions glutamine 194–lysine 197 are aspartate. Residue arginine 216 coordinates L-aspartate. Residues arginine 216–glutamate 218 and glutamine 225 each bind ATP. L-aspartate is bound at residue histidine 448. Glutamate 482 contacts ATP. Arginine 489 lines the L-aspartate pocket. Position 534-537 (glycine 534–arginine 537) interacts with ATP. A disordered region spans residues glycine 559–lysine 602. The span at glutamine 575–lysine 602 shows a compositional bias: basic and acidic residues.

The protein belongs to the class-II aminoacyl-tRNA synthetase family. Type 1 subfamily. As to quaternary structure, homodimer.

It localises to the cytoplasm. The catalysed reaction is tRNA(Asx) + L-aspartate + ATP = L-aspartyl-tRNA(Asx) + AMP + diphosphate. Aspartyl-tRNA synthetase with relaxed tRNA specificity since it is able to aspartylate not only its cognate tRNA(Asp) but also tRNA(Asn). Reaction proceeds in two steps: L-aspartate is first activated by ATP to form Asp-AMP and then transferred to the acceptor end of tRNA(Asp/Asn). The polypeptide is Aspartate--tRNA(Asp/Asn) ligase (Rhodococcus erythropolis (strain PR4 / NBRC 100887)).